The chain runs to 577 residues: Torulene dioxygenase (577 aa).

The segment at 1 to 20 (MALNGPGVYHRTREHEQEDA) is disordered. H239, H291, H361, and H570 together coordinate Fe(2+).

This sequence belongs to the carotenoid oxygenase family. Requires Fe(2+) as cofactor.

The protein localises to the cytoplasm. The protein resides in the cytosol. It catalyses the reaction torulene + O2 = 4'-apo-beta-carotenal + 3-methyl-2-butenal. The protein operates within carotenoid biosynthesis. In terms of biological role, torulene dioxygenase; part of pathway that mediates the biosynthesis of neurosporaxanthin, a carboxylic apocarotenoid acting as an essential protective pigments and leading to orange pigmentation. CarT mediates the cleavage of torulene into beta-apo-4'-carotenal, the aldehyde corresponding to the acidic neurosporaxanthin. Is also active on other monocyclic synthetic substrates such as beta-apo-8'-carotenal and beta-apo-10'-carotenal to produce beta-apo-14'-carotenal and retinal(beta-apo-15'-carotenal), respectively. Neurosporaxanthin is synthesized from geranyl-geranyl pyrophosphate (GGPP) through several enzymatic activities. Phytoene synthase activity performed by the bifunctional enzyme carAR first produces phytoene from geranyl-geranyl pyrophosphate (GGPP). The phytoene dehydrogenase carB then introduces 4 desaturations to lead to lycopene which is substrate of the carotene cyclase activity of carAR that leads to the production of gamma-carotene. CarB then performs a 5th desaturation reaction to yield torulene. Torulene is the substrate of the dioxidase carT that breaks the molecule, removing five carbon atoms to yield beta-apo-4'-carotenal, whereas the aldehyde dehydrogenase carD mediates the last step by converting beta-apo-4'-carotenal into neurosporaxanthin. In Gibberella fujikuroi (strain CBS 195.34 / IMI 58289 / NRRL A-6831) (Bakanae and foot rot disease fungus), this protein is Torulene dioxygenase.